The primary structure comprises 355 residues: 3-dehydroquinate synthase (355 aa).

NAD(+)-binding positions include 66–71 (SGETTK), 100–104 (GATGD), 124–125 (TT), K136, K145, and 163–166 (FLET). The Zn(2+) site is built by E178, H242, and H256.

The protein belongs to the sugar phosphate cyclases superfamily. Dehydroquinate synthase family. The cofactor is Co(2+). Requires Zn(2+) as cofactor. It depends on NAD(+) as a cofactor.

Its subcellular location is the cytoplasm. The catalysed reaction is 7-phospho-2-dehydro-3-deoxy-D-arabino-heptonate = 3-dehydroquinate + phosphate. It functions in the pathway metabolic intermediate biosynthesis; chorismate biosynthesis; chorismate from D-erythrose 4-phosphate and phosphoenolpyruvate: step 2/7. Catalyzes the conversion of 3-deoxy-D-arabino-heptulosonate 7-phosphate (DAHP) to dehydroquinate (DHQ). In Staphylococcus saprophyticus subsp. saprophyticus (strain ATCC 15305 / DSM 20229 / NCIMB 8711 / NCTC 7292 / S-41), this protein is 3-dehydroquinate synthase.